A 348-amino-acid polypeptide reads, in one-letter code: Calcium/calmodulin-dependent protein kinase type 1 (348 aa).

The short motif at 7-22 (RDGSGPAPNATIREKY) is the Nuclear localization signal 1 element. The region spanning 22–278 (YDFRDVLGTG…CQDALSHPWI (257 aa)) is the Protein kinase domain. ATP contacts are provided by residues 28-36 (LGTGAFSKV) and lysine 52. A Nuclear localization signal 2 motif is present at residues 71–78 (KVLRKLRH). Aspartate 144 functions as the Proton acceptor in the catalytic mechanism. Threonine 179 is subject to Phosphothreonine; by ckk-1. An autoinhibitory domain region spans residues 278–318 (ISGNTAYTHDIHGTVAVHLKKSLAKRNWKKAYNAAAAIRQL). A Nuclear export sequence motif is present at residues 288–294 (IHGTVAV). Positions 297 to 307 (KKSLAKRNWKK) match the Nuclear localization signal 3 motif. Residues 298–319 (KSLAKRNWKKAYNAAAAIRQLQ) are calmodulin-binding. Residues 327–338 (SNRLQKQASQQQ) show a composition bias toward polar residues. The tract at residues 327 to 348 (SNRLQKQASQQQPEPPTPAFHA) is disordered. Residues 339 to 348 (PEPPTPAFHA) show a composition bias toward pro residues.

It belongs to the protein kinase superfamily. CAMK Ser/Thr protein kinase family. CaMK subfamily. Interacts with importin ima-3; affinity for ima-3 is increased in the presence of Ca(2+) and calmodulin and leads to increased nuclear accumulation of cmk-1 in FLP neurons upon prolonged heat activation. Requires Mg(2+) as cofactor. Phosphorylation at Thr-179 can promote both nuclear export and import, sustaining nucleocytoplasmic shuttling. Expressed in head and tail neurons and vulval muscles. Throughout the nervous system. Detected in neurites and neuronal cell bodies. Expressed in the mechanosensory neurons, AVM and ALM, and in the interneurons, AVA, AVB and AVD. Expressed in the right and left ASE neurons where it functions cell-autonomously to control salt-avoidance learning. Expressed in FLP and AFD thermosensory neurons.

The protein resides in the nucleus. It is found in the cytoplasm. It catalyses the reaction L-seryl-[protein] + ATP = O-phospho-L-seryl-[protein] + ADP + H(+). It carries out the reaction L-threonyl-[protein] + ATP = O-phospho-L-threonyl-[protein] + ADP + H(+). Its activity is regulated as follows. Activated by Ca(2+)/calmodulin. Binding of calmodulin results in a conformational change that generates functional binding sites for both substrate and ATP, and thus relieves autoinhibition and lowers the Km of substrate binding. Must be phosphorylated by ckk-1 to be maximally active but this does not appear to be required for activity in AFD neurons. In terms of biological role, calcium/calmodulin-dependent protein kinase that operates in the calcium-triggered CaMKK-CaMK1 signaling cascade which results in transcriptional activation. Transcriptional activation occurs at least in part through phosphorylation of crh-1. Regulates gene expression, sensory morphology, and function of the AFD thermosensory neurons. Involved in long-term adaptation of AFD neurons to temperatures warmer than the initial acclimatized cultivation temperature. Acts in the FLP thermal nociceptors to moderate the responsiveness to noxious heat and controls neuropeptide release from FLP neurons in response to temperature elevations. Regulates the dauer decision, the decision of the larvae to enter into the alternative stress-resistant and long-lived dauer developmental stage, based on the feeding state, primarily in the AWC sensory neurons. Acts non cell-autonomously in the AWC neurons to regulate expression of the daf-28 insulin-like peptide and cell-autonomously in the ASI sensory neurons to regulate expression of the growth promoting daf-7 in a food-regulated manner. Plays a role in memory-based thermal response of an individual AFD neuron cell. Influences habituation and sensitivity to repeated mechanosensory stimuli. Involved in chemotaxis response in AWC neurons to attractant 2-heptanone, a volatile organic compound emitted by the nematode pathogenic bacterium B.nematocida B16. Acts in the ASE salt-sensing neurons to promote a type of aversive gustatory-associated learning called salt-avoidance learning via regulation of crh-1 signaling and the promotion of long-term memory formation, but is not involved in salt attraction. Represses transcription of glutamate receptor glr-1 in the nucleus basally and in response to changes in synaptic activity. This Caenorhabditis elegans protein is Calcium/calmodulin-dependent protein kinase type 1.